The following is a 571-amino-acid chain: Cytoplasmic polyadenylation element-binding protein 2 (571 aa).

2 disordered regions span residues 1–23 (MSKSRRLFLSMQGDDDFWGNGDR) and 51–75 (FKQNKLGRQQSESRHENEENKVSQE). Basic and acidic residues predominate over residues 61–75 (SESRHENEENKVSQE). One can recognise an RRM domain in the interval 435–517 (LVAFIGGVPR…KRVEIKPYFF (83 aa)).

In terms of biological role, cytoplasmic polyadenylation element binding protein that binds to and regulates the translation of specific mRNAs. In Caenorhabditis remanei (Caenorhabditis vulgaris), this protein is Cytoplasmic polyadenylation element-binding protein 2 (cpb-2).